A 766-amino-acid chain; its full sequence is DNA ligase (766 aa).

The disordered stretch occupies residues 1 to 30; sequence MSTVNAKGAKPATDANGQSLNPEEPSEALR. NAD(+) is bound by residues 57–61, 106–107, and Glu-141; these read DAEYD and SL. The active-site N6-AMP-lysine intermediate is the Lys-143. NAD(+)-binding residues include Arg-164, Glu-201, Lys-317, and Lys-341. 4 residues coordinate Zn(2+): Cys-435, Cys-438, Cys-454, and Cys-460. The 90-residue stretch at 669–758 folds into the BRCT domain; it reads STPRTLEGVT…PEAFGDRADA (90 aa). Residues 747–766 form a disordered region; that stretch reads QGPEAFGDRADAADQPAAGE.

It belongs to the NAD-dependent DNA ligase family. LigA subfamily. Mg(2+) is required as a cofactor. Requires Mn(2+) as cofactor.

The enzyme catalyses NAD(+) + (deoxyribonucleotide)n-3'-hydroxyl + 5'-phospho-(deoxyribonucleotide)m = (deoxyribonucleotide)n+m + AMP + beta-nicotinamide D-nucleotide.. DNA ligase that catalyzes the formation of phosphodiester linkages between 5'-phosphoryl and 3'-hydroxyl groups in double-stranded DNA using NAD as a coenzyme and as the energy source for the reaction. It is essential for DNA replication and repair of damaged DNA. The sequence is that of DNA ligase from Kocuria rhizophila (strain ATCC 9341 / DSM 348 / NBRC 103217 / DC2201).